Here is a 187-residue protein sequence, read N- to C-terminus: Large ribosomal subunit protein uL6 (187 aa).

Residues 159–187 (PYKGKGIRYKGEQLSSNPERLQVRSKEVR) form a disordered region.

Belongs to the universal ribosomal protein uL6 family. In terms of assembly, part of the 50S ribosomal subunit.

Its function is as follows. This protein binds to the 23S rRNA, and is important in its secondary structure. It is located near the subunit interface in the base of the L7/L12 stalk, and near the tRNA binding site of the peptidyltransferase center. The polypeptide is Large ribosomal subunit protein uL6 (Aquifex pyrophilus).